A 182-amino-acid chain; its full sequence is CKLF-like MARVEL transmembrane domain-containing protein 3 (182 aa).

Acidic residues predominate over residues 1–12 (MWPPDPDPDPDP). The segment at 1 to 21 (MWPPDPDPDPDPEPAGGSRPG) is disordered. The region spanning 36–155 (FLCSLKGRLL…DFYLIFNDVA (120 aa)) is the MARVEL domain. 3 consecutive transmembrane segments (helical) span residues 64–84 (ASAF…FLFA), 101–121 (MDFL…ITAI), and 131–151 (AAGV…YLIF).

It belongs to the chemokine-like factor family. Expressed in the leukocytes, placenta and testis.

Its subcellular location is the membrane. The sequence is that of CKLF-like MARVEL transmembrane domain-containing protein 3 (CMTM3) from Homo sapiens (Human).